The chain runs to 129 residues: Small ribosomal subunit protein uS8 (129 aa).

It belongs to the universal ribosomal protein uS8 family. Part of the 30S ribosomal subunit.

Functionally, one of the primary rRNA binding proteins, it binds directly to 16S rRNA central domain where it helps coordinate assembly of the platform of the 30S subunit. This is Small ribosomal subunit protein uS8 from Thermofilum pendens (strain DSM 2475 / Hrk 5).